A 946-amino-acid chain; its full sequence is Bifunctional glutamine synthetase adenylyltransferase/adenylyl-removing enzyme (946 aa).

Residues 1–440 form an adenylyl removase region; the sequence is MKPLSSPLQQ…VFNELIGDDE (440 aa). An adenylyl transferase region spans residues 449–946; sequence SEQWRELWQD…ASWQKWLVEE (498 aa).

Belongs to the GlnE family. The cofactor is Mg(2+).

It carries out the reaction [glutamine synthetase]-O(4)-(5'-adenylyl)-L-tyrosine + phosphate = [glutamine synthetase]-L-tyrosine + ADP. The catalysed reaction is [glutamine synthetase]-L-tyrosine + ATP = [glutamine synthetase]-O(4)-(5'-adenylyl)-L-tyrosine + diphosphate. In terms of biological role, involved in the regulation of glutamine synthetase GlnA, a key enzyme in the process to assimilate ammonia. When cellular nitrogen levels are high, the C-terminal adenylyl transferase (AT) inactivates GlnA by covalent transfer of an adenylyl group from ATP to specific tyrosine residue of GlnA, thus reducing its activity. Conversely, when nitrogen levels are low, the N-terminal adenylyl removase (AR) activates GlnA by removing the adenylyl group by phosphorolysis, increasing its activity. The regulatory region of GlnE binds the signal transduction protein PII (GlnB) which indicates the nitrogen status of the cell. This is Bifunctional glutamine synthetase adenylyltransferase/adenylyl-removing enzyme from Shigella flexneri.